The following is a 144-amino-acid chain: NADH dehydrogenase [ubiquinone] 1 alpha subcomplex subunit 13 (144 aa).

An N-acetylalanine modification is found at A2. A helical membrane pass occupies residues 30–51; it reads LSGYSMLAIGIGTLIYGHWSIM. An important for inducing cell death region spans residues 102–144; that stretch reads PDWKVGESVFHTTRWVPPLIGELYGLRTTEEALHASHGFMWYT.

The protein belongs to the complex I NDUFA13 subunit family. In terms of assembly, complex I is composed of 45 different subunits. Interacts with CARD15, but not with CARD4. Interacts with STAT3, but not with STAT1, STAT2 and STAT5A. Interacts with OLFM4. As to quaternary structure, (Microbial infection) Interacts with HHV-8 IRF1, in the nucleus, with HPV-16 E6 and SV40 LT. In terms of tissue distribution, widely expressed, with highest expression in heart, skeletal muscle, liver, kidney and placenta. In intestinal mucosa, down-regulated in areas involved in Crohn disease and ulcerative colitis.

The protein resides in the mitochondrion inner membrane. The protein localises to the nucleus. Accessory subunit of the mitochondrial membrane respiratory chain NADH dehydrogenase (Complex I), that is believed not to be involved in catalysis. Complex I functions in the transfer of electrons from NADH to the respiratory chain. The immediate electron acceptor for the enzyme is believed to be ubiquinone. Involved in the interferon/all-trans-retinoic acid (IFN/RA) induced cell death. This apoptotic activity is inhibited by interaction with viral IRF1. Prevents the transactivation of STAT3 target genes. May play a role in CARD15-mediated innate mucosal responses and serve to regulate intestinal epithelial cell responses to microbes. The chain is NADH dehydrogenase [ubiquinone] 1 alpha subcomplex subunit 13 (NDUFA13) from Homo sapiens (Human).